The sequence spans 190 residues: dCTP deaminase (190 aa).

Residue 113–118 participates in dCTP binding; sequence KSTYAR. Glu139 acts as the Proton donor/acceptor in catalysis. Residues Gln158, Tyr172, Lys181, and Gln182 each coordinate dCTP.

It belongs to the dCTP deaminase family. In terms of assembly, homotrimer.

It catalyses the reaction dCTP + H2O + H(+) = dUTP + NH4(+). Its pathway is pyrimidine metabolism; dUMP biosynthesis; dUMP from dCTP (dUTP route): step 1/2. Its function is as follows. Catalyzes the deamination of dCTP to dUTP. The sequence is that of dCTP deaminase from Chlamydia muridarum (strain MoPn / Nigg).